Here is a 366-residue protein sequence, read N- to C-terminus: Aminomethyltransferase (366 aa).

This sequence belongs to the GcvT family. In terms of assembly, the glycine cleavage system is composed of four proteins: P, T, L and H.

The enzyme catalyses N(6)-[(R)-S(8)-aminomethyldihydrolipoyl]-L-lysyl-[protein] + (6S)-5,6,7,8-tetrahydrofolate = N(6)-[(R)-dihydrolipoyl]-L-lysyl-[protein] + (6R)-5,10-methylene-5,6,7,8-tetrahydrofolate + NH4(+). The glycine cleavage system catalyzes the degradation of glycine. In Chlorobium chlorochromatii (strain CaD3), this protein is Aminomethyltransferase.